A 205-amino-acid chain; its full sequence is Meiotic nuclear division protein 1 homolog (205 aa).

At Ser2 the chain carries N-acetylserine. Residues 83 to 173 (KRKLEVLDSQ…EAANRWTDNI (91 aa)) adopt a coiled-coil conformation.

The protein belongs to the MND1 family. Heterodimer with PSMC3IP/HOP2. MND1-PSMC3IP interacts with DMC1 and RAD51 and binds preferentially to dsDNA.

The protein localises to the nucleus. Required for proper homologous chromosome pairing and efficient cross-over and intragenic recombination during meiosis. Stimulates both DMC1- and RAD51-mediated homologous strand assimilation, which is required for the resolution of meiotic double-strand breaks. This is Meiotic nuclear division protein 1 homolog from Bos taurus (Bovine).